The chain runs to 395 residues: S-adenosylmethionine synthase (395 aa).

H16 serves as a coordination point for ATP. Residue D18 participates in Mg(2+) binding. E44 serves as a coordination point for K(+). Residues E57 and Q100 each contribute to the L-methionine site. The segment at 100–110 (QSPDIAQGVDR) is flexible loop. Residues 167–169 (DAK), 233–234 (RF), D242, 248–249 (RK), A265, and K269 contribute to the ATP site. D242 is a binding site for L-methionine. K273 serves as a coordination point for L-methionine.

Belongs to the AdoMet synthase family. Homotetramer; dimer of dimers. The cofactor is Mg(2+). Requires K(+) as cofactor.

Its subcellular location is the cytoplasm. The catalysed reaction is L-methionine + ATP + H2O = S-adenosyl-L-methionine + phosphate + diphosphate. Its pathway is amino-acid biosynthesis; S-adenosyl-L-methionine biosynthesis; S-adenosyl-L-methionine from L-methionine: step 1/1. Catalyzes the formation of S-adenosylmethionine (AdoMet) from methionine and ATP. The overall synthetic reaction is composed of two sequential steps, AdoMet formation and the subsequent tripolyphosphate hydrolysis which occurs prior to release of AdoMet from the enzyme. The chain is S-adenosylmethionine synthase from Burkholderia mallei (strain NCTC 10247).